Consider the following 433-residue polypeptide: Keratin, type I cytoskeletal 17 (433 aa).

Residues 1–24 (MTTTIRQFTSSSSIKGSSGLGGGS) form a disordered region. Positions 1 to 83 (MTTTIRQFTS…GGVDGLLAGG (83 aa)) are head. Phosphoserine occurs at positions 12 and 13. Residue K15 forms a Glycyl lysine isopeptide (Lys-Gly) (interchain with G-Cter in SUMO1); alternate linkage. K15 participates in a covalent cross-link: Glycyl lysine isopeptide (Lys-Gly) (interchain with G-Cter in SUMO2); alternate. S25, S32, S34, and S39 each carry phosphoserine. The residue at position 44 (S44) is a Phosphoserine; by RPS6KA1. The interval 84–120 (EKATMQNLNDRLASYLDKVRALEEANTELEVKIRDWY) is coil 1A. An IF rod domain is found at 84–395 (EKATMQNLND…RLLEGEDAHL (312 aa)). Phosphothreonine is present on T110. The linker 1 stretch occupies residues 121–138 (QKQAPGPARDYSAYYQTI). The interval 139-230 (EDLKNKILVA…NHEEEMNALR (92 aa)) is coil 1B. The segment at 231 to 250 (GQVGGEINVEMDAAPGVDLS) is linker 12. Residues 251–392 (RILSEMRDQY…TYRRLLEGED (142 aa)) are coil 2. Residue K278 forms a Glycyl lysine isopeptide (Lys-Gly) (interchain with G-Cter in SUMO2) linkage. T279 is subject to Phosphothreonine. At S323 the chain carries Phosphoserine. The tract at residues 393–433 (AHLTQYKPKEPVTTRQVRTIVEEVQDGKVISSREQVHQTTR) is tail. Glycyl lysine isopeptide (Lys-Gly) (interchain with G-Cter in SUMO1); alternate cross-links involve residues K399, K401, and K420. Residues K399, K401, and K420 each participate in a glycyl lysine isopeptide (Lys-Gly) (interchain with G-Cter in SUMO2); alternate cross-link.

The protein belongs to the intermediate filament family. As to quaternary structure, heterodimer of a type I and a type II keratin. KRT17 associates with KRT6 isomers (KRT6A or KRT6B). Interacts with TRADD and SFN. Phosphorylation at Ser-44 occurs in a growth- and stress-dependent fashion in skin keratinocytes, it has no effect on filament organization.

Its subcellular location is the cytoplasm. Functionally, type I keratin involved in the formation and maintenance of various skin appendages, specifically in determining shape and orientation of hair. Required for the correct growth of hair follicles, in particular for the persistence of the anagen (growth) state. Modulates the function of TNF-alpha in the specific context of hair cycling. Regulates protein synthesis and epithelial cell growth through binding to the adapter protein SFN and by stimulating Akt/mTOR pathway. Involved in tissue repair. May be a marker of basal cell differentiation in complex epithelia and therefore indicative of a certain type of epithelial 'stem cells'. Acts as a promoter of epithelial proliferation by acting a regulator of immune response in skin: promotes Th1/Th17-dominated immune environment contributing to the development of basaloid skin tumors. May act as an autoantigen in the immunopathogenesis of psoriasis, with certain peptide regions being a major target for autoreactive T-cells and hence causing their proliferation. The protein is Keratin, type I cytoskeletal 17 of Rattus norvegicus (Rat).